Reading from the N-terminus, the 291-residue chain is Protease HtpX (291 aa).

A run of 2 helical transmembrane segments spans residues 4–24 (IALF…VLNI) and 36–56 (LSGL…VSLL). Residue H143 participates in Zn(2+) binding. The active site involves E144. H147 is a binding site for Zn(2+). 2 helical membrane-spanning segments follow: residues 151–171 (GDMI…IFLS) and 199–219 (FIVS…LTMW). E225 is a Zn(2+) binding site.

Belongs to the peptidase M48B family. The cofactor is Zn(2+).

It is found in the cell inner membrane. The chain is Protease HtpX from Aliivibrio salmonicida (strain LFI1238) (Vibrio salmonicida (strain LFI1238)).